Here is a 185-residue protein sequence, read N- to C-terminus: Ribosome-recycling factor (185 aa).

This sequence belongs to the RRF family.

The protein localises to the cytoplasm. Responsible for the release of ribosomes from messenger RNA at the termination of protein biosynthesis. May increase the efficiency of translation by recycling ribosomes from one round of translation to another. The sequence is that of Ribosome-recycling factor from Shewanella amazonensis (strain ATCC BAA-1098 / SB2B).